The following is a 698-amino-acid chain: Elongation factor G (698 aa).

The 283-residue stretch at 8 to 290 (ERYRNIGISA…AVIELLPSPT (283 aa)) folds into the tr-type G domain. GTP contacts are provided by residues 17–24 (AHIDAGKT), 88–92 (DTPGH), and 142–145 (NKMD).

Belongs to the TRAFAC class translation factor GTPase superfamily. Classic translation factor GTPase family. EF-G/EF-2 subfamily.

It localises to the cytoplasm. Catalyzes the GTP-dependent ribosomal translocation step during translation elongation. During this step, the ribosome changes from the pre-translocational (PRE) to the post-translocational (POST) state as the newly formed A-site-bound peptidyl-tRNA and P-site-bound deacylated tRNA move to the P and E sites, respectively. Catalyzes the coordinated movement of the two tRNA molecules, the mRNA and conformational changes in the ribosome. The polypeptide is Elongation factor G (Chromobacterium violaceum (strain ATCC 12472 / DSM 30191 / JCM 1249 / CCUG 213 / NBRC 12614 / NCIMB 9131 / NCTC 9757 / MK)).